Consider the following 561-residue polypeptide: MKRPKLKKASKRLSCAKRYKIQKKVREHNRKLKKAAKKQGISRKAKKDIGVPNSAPFKEEVLREAEQRKQELETLKEQNKIVKQQEKAAKRKKEKDAASSVKEPAAKKAKKAAKIKEARAAIVKVKSAKTFKCQELNKVIEASDVIVEVLDARDPLGCRCPQLEEMVLKHEGKKKLLFILNKIDLVPKDNLEKWLHFLEAECPTFLFKSSMQLKDRTVQQKRQQRGTNAVLDHSRAASCFGKDFLLQTLNDLANKKEGETMLKVGVVGFPNVGKSSIINSLKEMRACNAGVQRGLTRCMQEVHITKKVKMIDSPGILAALSNPGSAMALRSLQVEEKEESPQEAVRNLLKQCNQQHVMLQYNVPDYRSSLEFLTTFAMKHGLLQKGGVADTELAATTFLNDWTGAKLSYYSRVPERQGLPSYLSDAIVTELQSDVDMDAVKKGNENVKRSVRFPNLASCISFDSSGPTAGVLDVSELPKEILTKAATTTDAEEEKMDTTTNTDEPEAESHISSTVEPIQEPTEKRKDKPAKEVKFVPVNTDLTSMQNKNNEDAYDFNTDFV.

Over residues 28–46 (HNRKLKKAAKKQGISRKAK) the composition is skewed to basic residues. Disordered stretches follow at residues 28-58 (HNRKLKKAAKKQGISRKAKKDIGVPNSAPFK) and 76-110 (KEQNKIVKQQEKAAKRKKEKDAASSVKEPAAKKAK). A coiled-coil region spans residues 53 to 98 (NSAPFKEEVLREAEQRKQELETLKEQNKIVKQQEKAAKRKKEKDAA). Over residues 76 to 88 (KEQNKIVKQQEKA) the composition is skewed to basic and acidic residues. The region spanning 133–319 (CQELNKVIEA…MIDSPGILAA (187 aa)) is the CP-type G domain. Residues 181 to 184 (NKID), 268 to 275 (GFPNVGKS), and 312 to 315 (DSPG) each bind GTP. Residues 486–532 (ATTTDAEEEKMDTTTNTDEPEAESHISSTVEPIQEPTEKRKDKPAKE) are disordered. The span at 521–532 (PTEKRKDKPAKE) shows a compositional bias: basic and acidic residues.

Belongs to the TRAFAC class YlqF/YawG GTPase family.

It localises to the nucleus. Its subcellular location is the nucleolus. Functionally, may play a role in regulating cellular proliferation. This chain is Guanine nucleotide-binding protein-like 3 (gnl3), found in Danio rerio (Zebrafish).